We begin with the raw amino-acid sequence, 286 residues long: Translocon-associated protein subunit alpha (286 aa).

An N-terminal signal peptide occupies residues 1–21 (MRLLPRLLLLFLLAFPAAVLL). Over 22-207 (RGGPGGSLAL…EREDGLDGET (186 aa)) the chain is Lumenal. Residues 46–75 (IIEDEDDEAEVEEDEPTDLAEDKEEEDVSS) are compositionally biased toward acidic residues. Residues 46–83 (IIEDEDDEAEVEEDEPTDLAEDKEEEDVSSEPEASPSA) are disordered. N-linked (GlcNAc...) asparagine glycans are attached at residues asparagine 136 and asparagine 191. A helical membrane pass occupies residues 208–228 (IFMYMFLAGLGLLVVVGLHQL). The Cytoplasmic portion of the chain corresponds to 229 to 286 (LESRKRKRPIQKVEMGTSSQNDVDMSWIPQETLNQINKASPRRQPRKRAQKRSVGSDE). Positions 236 to 286 (RPIQKVEMGTSSQNDVDMSWIPQETLNQINKASPRRQPRKRAQKRSVGSDE) are disordered. Residues 244-266 (GTSSQNDVDMSWIPQETLNQINK) are compositionally biased toward polar residues. Serine 247 is modified (phosphoserine). Residue threonine 260 is modified to Phosphothreonine. Serine 268 is modified (phosphoserine). The segment covering 268 to 279 (SPRRQPRKRAQK) has biased composition (basic residues).

It belongs to the TRAP-alpha family. As to quaternary structure, heterotetramer of TRAP-alpha, TRAP-beta, TRAP-delta and TRAP-gamma. Interacts with palmitoylated calnexin (CALX), the interaction is required for efficient folding of glycosylated proteins.

The protein resides in the endoplasmic reticulum membrane. In terms of biological role, TRAP proteins are part of a complex whose function is to bind calcium to the ER membrane and thereby regulate the retention of ER resident proteins. May be involved in the recycling of the translocation apparatus after completion of the translocation process or may function as a membrane-bound chaperone facilitating folding of translocated proteins. This Mus musculus (Mouse) protein is Translocon-associated protein subunit alpha (Ssr1).